Here is a 316-residue protein sequence, read N- to C-terminus: L-lactate dehydrogenase 3 (316 aa).

Residues Val-16, Asp-37, Arg-42, and Tyr-68 each coordinate NAD(+). Position 91 (Arg-91) interacts with substrate. Residues Ser-104, 121-123 (ASN), and Thr-146 each bind NAD(+). Residue 123-126 (NPVD) coordinates substrate. 151 to 154 (DSSR) provides a ligand contact to substrate. Arg-156 and His-171 together coordinate beta-D-fructose 1,6-bisphosphate. Residue His-178 is the Proton acceptor of the active site. Thr-233 contacts substrate.

The protein belongs to the LDH/MDH superfamily. LDH family. In terms of assembly, homotetramer.

It is found in the cytoplasm. It catalyses the reaction (S)-lactate + NAD(+) = pyruvate + NADH + H(+). Its pathway is fermentation; pyruvate fermentation to lactate; (S)-lactate from pyruvate: step 1/1. Its activity is regulated as follows. Allosterically activated by fructose 1,6-bisphosphate (FBP). Its function is as follows. Catalyzes the conversion of lactate to pyruvate. This chain is L-lactate dehydrogenase 3, found in Bacillus thuringiensis subsp. konkukian (strain 97-27).